Consider the following 232-residue polypeptide: Orotidine 5'-phosphate decarboxylase (232 aa).

Residues Asp-11, Lys-33, 60-69 (DLKFHDIPNT), Thr-120, Arg-181, Gln-190, Gly-210, and Arg-211 contribute to the substrate site. Lys-62 serves as the catalytic Proton donor.

It belongs to the OMP decarboxylase family. Type 1 subfamily. Homodimer.

The enzyme catalyses orotidine 5'-phosphate + H(+) = UMP + CO2. Its pathway is pyrimidine metabolism; UMP biosynthesis via de novo pathway; UMP from orotate: step 2/2. Its function is as follows. Catalyzes the decarboxylation of orotidine 5'-monophosphate (OMP) to uridine 5'-monophosphate (UMP). The sequence is that of Orotidine 5'-phosphate decarboxylase from Vibrio vulnificus (strain CMCP6).